A 312-amino-acid chain; its full sequence is Pantothenate synthetase (312 aa).

Residue 42–49 (MGALHTGH) participates in ATP binding. The active-site Proton donor is the His49. Position 73 (Gln73) interacts with (R)-pantoate. A beta-alanine-binding site is contributed by Gln73. Residue 159-162 (GEKD) coordinates ATP. Gln165 contributes to the (R)-pantoate binding site. Residues Val188 and 196–199 (LSSR) contribute to the ATP site.

It belongs to the pantothenate synthetase family. In terms of assembly, homodimer.

Its subcellular location is the cytoplasm. The catalysed reaction is (R)-pantoate + beta-alanine + ATP = (R)-pantothenate + AMP + diphosphate + H(+). The protein operates within cofactor biosynthesis; (R)-pantothenate biosynthesis; (R)-pantothenate from (R)-pantoate and beta-alanine: step 1/1. In terms of biological role, catalyzes the condensation of pantoate with beta-alanine in an ATP-dependent reaction via a pantoyl-adenylate intermediate. The polypeptide is Pantothenate synthetase (Rhodococcus jostii (strain RHA1)).